Consider the following 876-residue polypeptide: Alanine--tRNA ligase (876 aa).

Residue Lys74 is modified to N6-acetyllysine. 4 residues coordinate Zn(2+): His564, His568, Cys666, and His670.

It belongs to the class-II aminoacyl-tRNA synthetase family. In terms of assembly, homotetramer. Zn(2+) is required as a cofactor.

Its subcellular location is the cytoplasm. It carries out the reaction tRNA(Ala) + L-alanine + ATP = L-alanyl-tRNA(Ala) + AMP + diphosphate. Its function is as follows. Catalyzes the attachment of alanine to tRNA(Ala) in a two-step reaction: alanine is first activated by ATP to form Ala-AMP and then transferred to the acceptor end of tRNA(Ala). Also edits incorrectly charged Ser-tRNA(Ala) and Gly-tRNA(Ala) via its editing domain. The polypeptide is Alanine--tRNA ligase (Shigella dysenteriae serotype 1 (strain Sd197)).